The primary structure comprises 185 residues: MANDKNEDQKEEETKTLQEKYDELLEELDSKNKELAKINEDLEKQKEETQEYISLSQRLQADFENFKKINEKKSKDIIKFANEPLIKNILDSYEDLERALENSKTEKELRDGVELIYSKIKDVLTKEGLEEIPAKGEKFDPFKHEALMVANDENVENGYIIDELMKGYTLKGKVIKYSKVRVCKK.

This sequence belongs to the GrpE family. As to quaternary structure, homodimer.

Its subcellular location is the cytoplasm. Its function is as follows. Participates actively in the response to hyperosmotic and heat shock by preventing the aggregation of stress-denatured proteins, in association with DnaK and GrpE. It is the nucleotide exchange factor for DnaK and may function as a thermosensor. Unfolded proteins bind initially to DnaJ; upon interaction with the DnaJ-bound protein, DnaK hydrolyzes its bound ATP, resulting in the formation of a stable complex. GrpE releases ADP from DnaK; ATP binding to DnaK triggers the release of the substrate protein, thus completing the reaction cycle. Several rounds of ATP-dependent interactions between DnaJ, DnaK and GrpE are required for fully efficient folding. The polypeptide is Protein GrpE (Methanobrevibacter smithii (strain ATCC 35061 / DSM 861 / OCM 144 / PS)).